The following is a 165-amino-acid chain: ATP synthase subunit delta, mitochondrial (165 aa).

A mitochondrion-targeting transit peptide spans 1-27 (MNSLRIARAALRVRPTAVRAPLQRRGY).

It belongs to the ATPase epsilon chain family. In terms of assembly, F-type ATPases have 2 components, CF(1) - the catalytic core - and CF(0) - the membrane proton channel. CF(1) has five subunits: alpha(3), beta(3), gamma(1), delta(1), epsilon(1). CF(0) has three main subunits: a, b and c.

The protein resides in the mitochondrion. The protein localises to the mitochondrion inner membrane. Its function is as follows. Mitochondrial membrane ATP synthase (F(1)F(0) ATP synthase or Complex V) produces ATP from ADP in the presence of a proton gradient across the membrane which is generated by electron transport complexes of the respiratory chain. F-type ATPases consist of two structural domains, F(1) - containing the extramembraneous catalytic core, and F(0) - containing the membrane proton channel, linked together by a central stalk and a peripheral stalk. During catalysis, ATP turnover in the catalytic domain of F(1) is coupled via a rotary mechanism of the central stalk subunits to proton translocation. Part of the complex F(1) domain and of the central stalk which is part of the complex rotary element. Rotation of the central stalk against the surrounding alpha(3)beta(3) subunits leads to hydrolysis of ATP in three separate catalytic sites on the beta subunits. This chain is ATP synthase subunit delta, mitochondrial (des), found in Neurospora crassa (strain ATCC 24698 / 74-OR23-1A / CBS 708.71 / DSM 1257 / FGSC 987).